We begin with the raw amino-acid sequence, 210 residues long: MTPLFAPVPHRLGLYPVVDSVEWVTRLLDAGVRTLQLRIKDKTDAEVETDIAAAIALGQRYHARLFINDYWRLAIKHQAYGVHLGQEDLETADPDAIRRAGLRLGVSTHDDMEIDVALAVRPSYIALGHVFPTQTKQMPSAPQGLAQLAAHVKRLGDYPTVAIGGISLERAPAVLETGVGSIAVVSAITQAPDWRGATQRLLELAGVGDE.

4-amino-2-methyl-5-(diphosphooxymethyl)pyrimidine-binding positions include 36–40 (QLRIK) and Asn-68. Asp-69 and Asp-88 together coordinate Mg(2+). Ser-107 contacts 4-amino-2-methyl-5-(diphosphooxymethyl)pyrimidine. 133–135 (TQT) lines the 2-[(2R,5Z)-2-carboxy-4-methylthiazol-5(2H)-ylidene]ethyl phosphate pocket. Lys-136 contacts 4-amino-2-methyl-5-(diphosphooxymethyl)pyrimidine. 2-[(2R,5Z)-2-carboxy-4-methylthiazol-5(2H)-ylidene]ethyl phosphate contacts are provided by residues Gly-165 and 185–186 (VS).

Belongs to the thiamine-phosphate synthase family. Requires Mg(2+) as cofactor.

It carries out the reaction 2-[(2R,5Z)-2-carboxy-4-methylthiazol-5(2H)-ylidene]ethyl phosphate + 4-amino-2-methyl-5-(diphosphooxymethyl)pyrimidine + 2 H(+) = thiamine phosphate + CO2 + diphosphate. The catalysed reaction is 2-(2-carboxy-4-methylthiazol-5-yl)ethyl phosphate + 4-amino-2-methyl-5-(diphosphooxymethyl)pyrimidine + 2 H(+) = thiamine phosphate + CO2 + diphosphate. It catalyses the reaction 4-methyl-5-(2-phosphooxyethyl)-thiazole + 4-amino-2-methyl-5-(diphosphooxymethyl)pyrimidine + H(+) = thiamine phosphate + diphosphate. Its pathway is cofactor biosynthesis; thiamine diphosphate biosynthesis; thiamine phosphate from 4-amino-2-methyl-5-diphosphomethylpyrimidine and 4-methyl-5-(2-phosphoethyl)-thiazole: step 1/1. Functionally, condenses 4-methyl-5-(beta-hydroxyethyl)thiazole monophosphate (THZ-P) and 2-methyl-4-amino-5-hydroxymethyl pyrimidine pyrophosphate (HMP-PP) to form thiamine monophosphate (TMP). The polypeptide is Thiamine-phosphate synthase (Cronobacter sakazakii (strain ATCC BAA-894) (Enterobacter sakazakii)).